A 234-amino-acid polypeptide reads, in one-letter code: Sperm-associated microtubule inner protein 5 (234 aa).

Microtubule inner protein component of sperm flagellar doublet microtubules. In terms of tissue distribution, expressed in testis (at protein level). Strongly expressed in peritubular cells and Leydig cells and weakly expressed in the cytoplasm of spermatocytes.

Its subcellular location is the cytoplasm. It is found in the cytoskeleton. The protein resides in the flagellum axoneme. It localises to the nucleus. Microtubule inner protein (MIP) part of the dynein-decorated doublet microtubules (DMTs) in flagellum axoneme. May serve to reinforce and thus stabilize the microtubule structure in the sperm flagella. This chain is Sperm-associated microtubule inner protein 5, found in Homo sapiens (Human).